Reading from the N-terminus, the 385-residue chain is Deoxyhypusine synthase (385 aa).

Residues 108–112 (SNLIS), 134–136 (TAG), E140, and D257 contribute to the NAD(+) site. 139-140 (EE) is a spermidine binding site. Residue D262 coordinates spermidine. Residue G304 participates in NAD(+) binding. H309 contacts spermidine. 329–330 (TG) is a binding site for NAD(+). Spermidine contacts are provided by residues 335–337 (GSD) and 344–350 (EAVSWGK). K350 acts as the Nucleophile in catalysis. 363-364 (DV) serves as a coordination point for NAD(+).

This sequence belongs to the deoxyhypusine synthase family. Requires NAD(+) as cofactor.

The enzyme catalyses [eIF5A protein]-L-lysine + spermidine = [eIF5A protein]-deoxyhypusine + propane-1,3-diamine. Its pathway is protein modification; eIF5A hypusination. Catalyzes the NAD-dependent oxidative cleavage of spermidine and the subsequent transfer of the butylamine moiety of spermidine to the epsilon-amino group of a specific lysine residue of the eIF-5A precursor protein to form the intermediate deoxyhypusine residue. The sequence is that of Deoxyhypusine synthase (DYS1) from Candida glabrata (strain ATCC 2001 / BCRC 20586 / JCM 3761 / NBRC 0622 / NRRL Y-65 / CBS 138) (Yeast).